The primary structure comprises 241 residues: LexA repressor (241 aa).

Positions 26–46 (FDEMKTALDLRSKSGIHRLIT) form a DNA-binding region, H-T-H motif. Catalysis depends on for autocatalytic cleavage activity residues serine 162 and lysine 200.

This sequence belongs to the peptidase S24 family. In terms of assembly, homodimer.

It carries out the reaction Hydrolysis of Ala-|-Gly bond in repressor LexA.. Its function is as follows. Represses a number of genes involved in the response to DNA damage (SOS response), including recA and lexA. In the presence of single-stranded DNA, RecA interacts with LexA causing an autocatalytic cleavage which disrupts the DNA-binding part of LexA, leading to derepression of the SOS regulon and eventually DNA repair. The protein is LexA repressor of Ruegeria sp. (strain TM1040) (Silicibacter sp.).